The primary structure comprises 158 residues: Ribosome maturation factor RimP (158 aa).

It belongs to the RimP family.

The protein resides in the cytoplasm. Its function is as follows. Required for maturation of 30S ribosomal subunits. This Streptococcus suis (strain 05ZYH33) protein is Ribosome maturation factor RimP.